We begin with the raw amino-acid sequence, 341 residues long: Ribosomal RNA small subunit methyltransferase H (341 aa).

Residues 47–49 (GGY), Asp-64, Phe-91, Asp-109, and Gln-116 contribute to the S-adenosyl-L-methionine site. The segment at 292–318 (VAASEDEASRNPRARSAKLRAGVRTPA) is disordered.

It belongs to the methyltransferase superfamily. RsmH family.

It localises to the cytoplasm. The enzyme catalyses cytidine(1402) in 16S rRNA + S-adenosyl-L-methionine = N(4)-methylcytidine(1402) in 16S rRNA + S-adenosyl-L-homocysteine + H(+). Specifically methylates the N4 position of cytidine in position 1402 (C1402) of 16S rRNA. The chain is Ribosomal RNA small subunit methyltransferase H from Sinorhizobium fredii (strain NBRC 101917 / NGR234).